The sequence spans 293 residues: 4-hydroxy-tetrahydrodipicolinate synthase (293 aa).

Thr47 lines the pyruvate pocket. Tyr135 serves as the catalytic Proton donor/acceptor. Lys163 (schiff-base intermediate with substrate) is an active-site residue. Val205 lines the pyruvate pocket.

The protein belongs to the DapA family. Homotetramer; dimer of dimers.

The protein localises to the cytoplasm. The catalysed reaction is L-aspartate 4-semialdehyde + pyruvate = (2S,4S)-4-hydroxy-2,3,4,5-tetrahydrodipicolinate + H2O + H(+). Its pathway is amino-acid biosynthesis; L-lysine biosynthesis via DAP pathway; (S)-tetrahydrodipicolinate from L-aspartate: step 3/4. Catalyzes the condensation of (S)-aspartate-beta-semialdehyde [(S)-ASA] and pyruvate to 4-hydroxy-tetrahydrodipicolinate (HTPA). The chain is 4-hydroxy-tetrahydrodipicolinate synthase from Methylibium petroleiphilum (strain ATCC BAA-1232 / LMG 22953 / PM1).